A 265-amino-acid polypeptide reads, in one-letter code: Tryptophan synthase alpha chain (265 aa).

Residues Glu-49 and Asp-60 each act as proton acceptor in the active site.

The protein belongs to the TrpA family. Tetramer of two alpha and two beta chains.

It carries out the reaction (1S,2R)-1-C-(indol-3-yl)glycerol 3-phosphate + L-serine = D-glyceraldehyde 3-phosphate + L-tryptophan + H2O. Its pathway is amino-acid biosynthesis; L-tryptophan biosynthesis; L-tryptophan from chorismate: step 5/5. Functionally, the alpha subunit is responsible for the aldol cleavage of indoleglycerol phosphate to indole and glyceraldehyde 3-phosphate. This Cupriavidus metallidurans (strain ATCC 43123 / DSM 2839 / NBRC 102507 / CH34) (Ralstonia metallidurans) protein is Tryptophan synthase alpha chain.